Here is a 248-residue protein sequence, read N- to C-terminus: Deoxyribose-phosphate aldolase (248 aa).

Catalysis depends on D106, which acts as the Proton donor/acceptor. K168 acts as the Schiff-base intermediate with acetaldehyde in catalysis. K197 serves as the catalytic Proton donor/acceptor.

Belongs to the DeoC/FbaB aldolase family. DeoC type 1 subfamily.

Its subcellular location is the cytoplasm. The catalysed reaction is 2-deoxy-D-ribose 5-phosphate = D-glyceraldehyde 3-phosphate + acetaldehyde. It functions in the pathway carbohydrate degradation; 2-deoxy-D-ribose 1-phosphate degradation; D-glyceraldehyde 3-phosphate and acetaldehyde from 2-deoxy-alpha-D-ribose 1-phosphate: step 2/2. Its function is as follows. Catalyzes a reversible aldol reaction between acetaldehyde and D-glyceraldehyde 3-phosphate to generate 2-deoxy-D-ribose 5-phosphate. This Sinorhizobium medicae (strain WSM419) (Ensifer medicae) protein is Deoxyribose-phosphate aldolase.